We begin with the raw amino-acid sequence, 341 residues long: 5-formaminoimidazole-4-carboxamide-1-(beta)-D-ribofuranosyl 5'-monophosphate synthetase (341 aa).

5-amino-1-(5-phospho-beta-D-ribosyl)imidazole-4-carboxamide is bound by residues H27 and S92. The region spanning 113 to 328 is the ATP-grasp domain; it reads RELLRWEADQ…MGERIAHEIK (216 aa). ATP contacts are provided by residues 143-195 and E217; that span reads AEEV…VPAY. N237 is a binding site for 5-amino-1-(5-phospho-beta-D-ribosyl)imidazole-4-carboxamide. 2 residues coordinate Mg(2+): E276 and E289.

Belongs to the phosphohexose mutase family. Mg(2+) serves as cofactor. Requires Mn(2+) as cofactor.

The catalysed reaction is 5-amino-1-(5-phospho-beta-D-ribosyl)imidazole-4-carboxamide + formate + ATP = 5-formamido-1-(5-phospho-D-ribosyl)imidazole-4-carboxamide + ADP + phosphate. It functions in the pathway purine metabolism; IMP biosynthesis via de novo pathway; 5-formamido-1-(5-phospho-D-ribosyl)imidazole-4-carboxamide from 5-amino-1-(5-phospho-D-ribosyl)imidazole-4-carboxamide (formate route): step 1/1. Catalyzes the ATP- and formate-dependent formylation of 5-aminoimidazole-4-carboxamide-1-beta-d-ribofuranosyl 5'-monophosphate (AICAR) to 5-formaminoimidazole-4-carboxamide-1-beta-d-ribofuranosyl 5'-monophosphate (FAICAR) in the absence of folates. This Pyrobaculum aerophilum (strain ATCC 51768 / DSM 7523 / JCM 9630 / CIP 104966 / NBRC 100827 / IM2) protein is 5-formaminoimidazole-4-carboxamide-1-(beta)-D-ribofuranosyl 5'-monophosphate synthetase.